Consider the following 640-residue polypeptide: MPTITLPDGSQRSFDHPVTVAEVAQSIGAGLAKATLAGKVDGKLVDACDLIERDASLQIITPKDEEGLEIIRHSCAHLVGHAVKQLYPNAKMVIGPVIDEGFYYDIAIDRPFTPEDMAAIEKRMAELIDKDYDVIKKVTPRAEVIEVFTSRGEDYKLRLVDDMPDEQAMGLYYHEEYVDMCRGPHVPNTRFLKAFKLTRISGAYWRGDSKNEQLQRIYGTAWADKKQLAAYIQRIEEAEKRDHRRIGKQLDLFHTQEEAPGMVFWHPAGWTLYQNLEQYMRQVQRENGYQEVRTPQVVDRILWEKSGHWSNYAENMFTTSSENRDYAVKPMNCPCHVQIFNQGLKSYRDLPLRMAEFGACHRNEPSGALHGIMRVRGFTQDDAHIFCTEEQVKKEAADFIKLTLKVYADFGFSDIAMKLSTRPAKRVGSDELWDRAEGALAEALNESGLAWEYQPGEGAFYGPKIEFTLRDCLGRNWQCGTLQYDPNLPERLDASYVAEDNSRQRPVMLHRAILGSFERFIGMLIEHYAGAFPAWLAPTQAVIMNITDKQAAFAIEVEKTLVQSGFRAKCDLRNEKIGFKIREHTLLKTPYLLVIGDREVETRSVAVRSREGVDMGSMPLEQFAQLLAQAVSRRGRQESE.

The 61-residue stretch at 1–61 folds into the TGS domain; it reads MPTITLPDGS…ERDASLQIIT (61 aa). The interval 242-533 is catalytic; the sequence is DHRRIGKQLD…LIEHYAGAFP (292 aa). Positions 333, 384, and 510 each coordinate Zn(2+).

This sequence belongs to the class-II aminoacyl-tRNA synthetase family. Homodimer. Zn(2+) is required as a cofactor.

The protein resides in the cytoplasm. It catalyses the reaction tRNA(Thr) + L-threonine + ATP = L-threonyl-tRNA(Thr) + AMP + diphosphate + H(+). Its function is as follows. Catalyzes the attachment of threonine to tRNA(Thr) in a two-step reaction: L-threonine is first activated by ATP to form Thr-AMP and then transferred to the acceptor end of tRNA(Thr). Also edits incorrectly charged L-seryl-tRNA(Thr). The sequence is that of Threonine--tRNA ligase from Stutzerimonas stutzeri (strain A1501) (Pseudomonas stutzeri).